Consider the following 894-residue polypeptide: MTDVTVKALAAEIQTSVDRLVQQFADAGIPKSADDSVSAQEKQTLLAHLNRENGSGPDKLTLQRKTRSTLNIPGTGGKSKSVQIEVRKKRTFVKRDPQETERLAAEEQAQREAEEQARREAEETAKREAQQKADREAAEQAKRDAAEKAKREAAEKDKVSNQQTDDMTKTAQAEKARRENEAAELKRKAEEEARRKLEEEARRVAEEARRMAEENKWTDNAEPTEDTSDYHVTTSQHARQAEDENDREVEGGRGRSRNAKAARPAKKGNKHSESKADREEARAAVRGGKGGKNRKGSALQQSFQKPVQAVNRDVVIGETITVGELANKMAVKGSQVIKAMMKLGAMATINQVIDQETAQLVAEEMGHKVILRRENELEEAVMSDRDTGAAAEPRAPVVTIMGHVDHGKTSLLDYIRSTKVASGEAGGITQHIGAYHVETDNGMITFLDTPGHAAFTSMRARGAQATDIVVLVVAADDGVMPQTIEAIQHAKAAGVPVVVAVNKIDKPEADPDRVKNELSQYGILPEEWGGESQFVHVSAKAGTGIDELLDAILLQAEVLELKAVRKGMASGAVIESFLDKGRGPVATVLVREGTLNKGDIVLCGFEYGRVRAMRNELGQEVLEAGPSIPVEILGLSGVPAAGDEVTVVRDEKKAREVALYRQGKFREVKLARQQKSKLENMFANMTEGEVHEVNIVLKADVQGSVEAISDSLLKLSTDEVKVKIIGSGVGGITETDATLAAASNAILVGFNVRADASARKVIEAESLDLRYYSVIYNLIDEVKAAMSGMLSPELKQQIIGLAEVRDVFKSPKFGAVAGCMVTEGTIKRHNPIRVLRDNVVIYEGELESLRRFKDDVNEVRNGMECGIGVKNYNDVRVGDMIEVFEIIEIQRTIA.

The tract at residues 47–305 is disordered; the sequence is AHLNRENGSG…GSALQQSFQK (259 aa). The segment covering 68-82 has biased composition (polar residues); it reads STLNIPGTGGKSKSV. 2 stretches are compositionally biased toward basic and acidic residues: residues 93–159 and 166–219; these read VKRD…KDKV and DMTK…KWTD. Residues 254–269 are compositionally biased toward basic residues; that stretch reads GRSRNAKAARPAKKGN. A compositionally biased stretch (basic and acidic residues) spans 270-283; sequence KHSESKADREEARA. Residues 393 to 562 enclose the tr-type G domain; it reads PRAPVVTIMG…LLQAEVLELK (170 aa). Residues 402 to 409 are G1; that stretch reads GHVDHGKT. 402–409 is a GTP binding site; it reads GHVDHGKT. The G2 stretch occupies residues 427-431; it reads GITQH. The tract at residues 448 to 451 is G3; it reads DTPG. GTP is bound by residues 448–452 and 502–505; these read DTPGH and NKID. The interval 502–505 is G4; sequence NKID. A G5 region spans residues 538-540; sequence SAK.

This sequence belongs to the TRAFAC class translation factor GTPase superfamily. Classic translation factor GTPase family. IF-2 subfamily.

Its subcellular location is the cytoplasm. In terms of biological role, one of the essential components for the initiation of protein synthesis. Protects formylmethionyl-tRNA from spontaneous hydrolysis and promotes its binding to the 30S ribosomal subunits. Also involved in the hydrolysis of GTP during the formation of the 70S ribosomal complex. The chain is Translation initiation factor IF-2 from Citrobacter koseri (strain ATCC BAA-895 / CDC 4225-83 / SGSC4696).